Here is a 198-residue protein sequence, read N- to C-terminus: MLYPTPIAKLIDSYSKLPGIGIKTATRLAFYTIGMEDDVVNEFAKNLLAAKRDLSYCSICGNLTDQDPCAICQDSTRDQSTILIVEDSRDVTALENIQEYHGLYHVLHGLISPMNGIGPDDINLKTLLTRLMENEVTEVIVATNATADGEATSMYISRVLKPAGIKVTRLARGLAVGSDIEYADEVTLLRAIENRTEL.

The segment at Cys-57 to Cys-72 adopts a C4-type zinc-finger fold. Positions Ser-80–Ala-175 constitute a Toprim domain.

This sequence belongs to the RecR family.

Its function is as follows. May play a role in DNA repair. It seems to be involved in an RecBC-independent recombinational process of DNA repair. It may act with RecF and RecO. In Streptococcus suis (strain 05ZYH33), this protein is Recombination protein RecR.